A 172-amino-acid chain; its full sequence is Sec-independent protein translocase protein TatB (172 aa).

Residues 1 to 21 (MIDLGISKLALIGAVALVVIG) traverse the membrane as a helical segment. Residues 97-129 (GDPASRQTATQAAEWRPAPAKSRNGRNSWRNKQ) form a disordered region.

It belongs to the TatB family. As to quaternary structure, the Tat system comprises two distinct complexes: a TatABC complex, containing multiple copies of TatA, TatB and TatC subunits, and a separate TatA complex, containing only TatA subunits. Substrates initially bind to the TatABC complex, which probably triggers association of the separate TatA complex to form the active translocon.

The protein resides in the cell inner membrane. Its function is as follows. Part of the twin-arginine translocation (Tat) system that transports large folded proteins containing a characteristic twin-arginine motif in their signal peptide across membranes. Together with TatC, TatB is part of a receptor directly interacting with Tat signal peptides. TatB may form an oligomeric binding site that transiently accommodates folded Tat precursor proteins before their translocation. In Ralstonia nicotianae (strain ATCC BAA-1114 / GMI1000) (Ralstonia solanacearum), this protein is Sec-independent protein translocase protein TatB.